Here is a 387-residue protein sequence, read N- to C-terminus: MLSIRRHAKTVASSCTNLTQKRTYVDVYMKWKRDPYFDNIEHILRSSQLKSVVSLKNCIVQEPNRCIPISAISKKTRQFDVSTKIAHFLRKFPSIFEEFVGPEYNLPWFRLTPEATELDRQERVVYQTSADDLRDRLKKLILMSKDNVLPLSIVQGMKWYLGLPDDYLQFPDMNLDSSFRFVDMEDGVKGLAVDYNGGDKVLSVLQKNAMKKRRGEVSLEEIEFPLFPSKGCRLRVKIEDWLMEFQKLPYVSPYDDYSCLDPSSDIAEKRVVGFLHELLCLFVEHSAERKKLLCLKKHFGLPQKVHKAFERHPQIFYLSMKNKTCTAILREPYRDKASVETHPVLGVRKKYIQLMKNSELILKSRRNSFGFRDEGVVDKDLDLDFEG.

A mitochondrion-targeting transit peptide spans 1 to 24 (MLSIRRHAKTVASSCTNLTQKRTY). The region spanning 32 to 358 (KRDPYFDNIE…KKYIQLMKNS (327 aa)) is the PORR domain.

It localises to the mitochondrion. In terms of biological role, RNA-binding protein involved in group II intron splicing. Binds specific group II introns and promotes their splicing (e.g. rpl2 and ccmFC). The chain is Protein WHAT'S THIS FACTOR 9, mitochondrial from Arabidopsis thaliana (Mouse-ear cress).